The primary structure comprises 538 residues: Putative cysteine ligase BshC (538 aa).

Belongs to the BshC family.

Involved in bacillithiol (BSH) biosynthesis. May catalyze the last step of the pathway, the addition of cysteine to glucosamine malate (GlcN-Mal) to generate BSH. The sequence is that of Putative cysteine ligase BshC from Halalkalibacterium halodurans (strain ATCC BAA-125 / DSM 18197 / FERM 7344 / JCM 9153 / C-125) (Bacillus halodurans).